Here is a 60-residue protein sequence, read N- to C-terminus: Transcriptional regulatory protein SenN (60 aa).

The segment at residues 11 to 31 (RFRKRKTFGNQILPLELLIEK) is a DNA-binding region (H-T-H motif).

This sequence to B.subtilis SenS.

Regulates the expression of extracellular-protein genes of Bacillus natto. This Bacillus subtilis subsp. natto protein is Transcriptional regulatory protein SenN (senN).